The following is a 509-amino-acid chain: UDP-N-acetylmuramoyl-L-alanyl-D-glutamate--2,6-diaminopimelate ligase (509 aa).

S32 is a binding site for UDP-N-acetyl-alpha-D-muramoyl-L-alanyl-D-glutamate. G117–T123 serves as a coordination point for ATP. Residues T159–T160, S186, Q192, and R194 each bind UDP-N-acetyl-alpha-D-muramoyl-L-alanyl-D-glutamate. K226 bears the N6-carboxylysine mark. Meso-2,6-diaminopimelate-binding positions include R401, D425–R428, G476, and E480. The short motif at D425 to R428 is the Meso-diaminopimelate recognition motif element.

It belongs to the MurCDEF family. MurE subfamily. Requires Mg(2+) as cofactor. Post-translationally, carboxylation is probably crucial for Mg(2+) binding and, consequently, for the gamma-phosphate positioning of ATP.

It is found in the cytoplasm. The catalysed reaction is UDP-N-acetyl-alpha-D-muramoyl-L-alanyl-D-glutamate + meso-2,6-diaminopimelate + ATP = UDP-N-acetyl-alpha-D-muramoyl-L-alanyl-gamma-D-glutamyl-meso-2,6-diaminopimelate + ADP + phosphate + H(+). Its pathway is cell wall biogenesis; peptidoglycan biosynthesis. In terms of biological role, catalyzes the addition of meso-diaminopimelic acid to the nucleotide precursor UDP-N-acetylmuramoyl-L-alanyl-D-glutamate (UMAG) in the biosynthesis of bacterial cell-wall peptidoglycan. The protein is UDP-N-acetylmuramoyl-L-alanyl-D-glutamate--2,6-diaminopimelate ligase of Prochlorococcus marinus (strain NATL2A).